The sequence spans 288 residues: Cyclin-dependent kinase 2 homolog (288 aa).

One can recognise a Protein kinase domain in the interval 4-284 (YHGLEKIGEG…AKQALEHAYF (281 aa)). Residues 10–18 (IGEGTYGVV) and K32 each bind ATP. T14 is modified (phosphothreonine). Y15 carries the post-translational modification Phosphotyrosine. The active-site Proton acceptor is D125. Position 158 is a phosphothreonine (T158).

Belongs to the protein kinase superfamily. CMGC Ser/Thr protein kinase family. CDC2/CDKX subfamily. As to quaternary structure, may form a complex composed of at least the catalytic subunit CRK2 and a cyclin. The cofactor is Mg(2+).

It localises to the cytoplasm. It catalyses the reaction L-seryl-[protein] + ATP = O-phospho-L-seryl-[protein] + ADP + H(+). The catalysed reaction is L-threonyl-[protein] + ATP = O-phospho-L-threonyl-[protein] + ADP + H(+). The enzyme catalyses [DNA-directed RNA polymerase] + ATP = phospho-[DNA-directed RNA polymerase] + ADP + H(+). Phosphorylation at Thr-14 or Tyr-15 inactivates the enzyme, while phosphorylation at Thr-158 activates it. In terms of biological role, serine/threonine-protein kinase. Involved in the control of the cell cycle. Required for entry into S-phase and mitosis. Probable component of the kinase complex that phosphorylates the repetitive C-terminus of RNA polymerase II. This Plasmodium vivax protein is Cyclin-dependent kinase 2 homolog.